The following is a 428-amino-acid chain: GTPase Obg (428 aa).

The region spanning 1-158 (MFIDTAKIFV…RWVALELKLL (158 aa)) is the Obg domain. One can recognise an OBG-type G domain in the interval 159 to 331 (ADVGLLGFPN…VIKEAARMLK (173 aa)). GTP is bound by residues 165–172 (GFPNVGKS), 190–194 (FTTLK), 212–215 (DVPG), 282–285 (NKCD), and 312–314 (SAA). Residues Ser172 and Thr192 each contribute to the Mg(2+) site. The region spanning 345 to 428 (RFIPEDKKFT…LNDFEFEYLL (84 aa)) is the OCT domain.

It belongs to the TRAFAC class OBG-HflX-like GTPase superfamily. OBG GTPase family. As to quaternary structure, monomer. Mg(2+) is required as a cofactor.

The protein resides in the cytoplasm. An essential GTPase which binds GTP, GDP and possibly (p)ppGpp with moderate affinity, with high nucleotide exchange rates and a fairly low GTP hydrolysis rate. Plays a role in control of the cell cycle, stress response, ribosome biogenesis and in those bacteria that undergo differentiation, in morphogenesis control. The polypeptide is GTPase Obg (Clostridium perfringens (strain ATCC 13124 / DSM 756 / JCM 1290 / NCIMB 6125 / NCTC 8237 / Type A)).